Reading from the N-terminus, the 202-residue chain is NAD(P)H dehydrogenase (quinone) 2 (202 aa).

The Flavodoxin-like domain maps to 4 to 190 (VLVLYYSSYG…AGAFHQGEIV (187 aa)). FMN-binding positions include 10-15 (SSYGHI) and 78-80 (TRF). Tyr12 is a binding site for NAD(+). Trp98 lines the substrate pocket. Residues 113-119 (STGTQHG) and His134 contribute to the FMN site.

It belongs to the WrbA family. The cofactor is FMN.

It carries out the reaction a quinone + NADH + H(+) = a quinol + NAD(+). The catalysed reaction is a quinone + NADPH + H(+) = a quinol + NADP(+). The sequence is that of NAD(P)H dehydrogenase (quinone) 2 from Rhizobium meliloti (strain 1021) (Ensifer meliloti).